Reading from the N-terminus, the 123-residue chain is rRNA-processing protein cgr-1 (123 aa).

The span at 1–13 (MSSTTTTTQTTSQ) shows a compositional bias: low complexity. 2 disordered regions span residues 1 to 47 (MSST…GLTS) and 85 to 123 (EKRA…LINS). A coiled-coil region spans residues 49–110 (EKRAKERQLL…EKMHKKRVER (62 aa)). Residues 85–102 (EKRAKKEEKERYEKMAEK) show a composition bias toward basic and acidic residues. The segment covering 103–123 (MHKKRVERLKRKEKRNKLINS) has biased composition (basic residues).

This sequence belongs to the CGR1 family.

The protein resides in the nucleus. The protein localises to the nucleolus. Functionally, involved in nucleolar integrity and required for processing of the pre-rRNA for the 60S ribosome subunit. This chain is rRNA-processing protein cgr-1 (cgr-1), found in Neurospora crassa (strain ATCC 24698 / 74-OR23-1A / CBS 708.71 / DSM 1257 / FGSC 987).